Consider the following 346-residue polypeptide: uncharacterized protein (346 aa).

Belongs to the Gfo/Idh/MocA family.

This is an uncharacterized protein from Escherichia coli (strain K12).